The sequence spans 1312 residues: Retinoblastoma-like protein A (1312 aa).

Disordered stretches follow at residues 1–67, 168–231, 336–359, 536–611, 987–1023, 1168–1236, and 1249–1312; these read MMAH…NNEN, SSSS…KNSS, HNYNNNSNNNNNNNNNNNNNNNNN, NNNN…IYGT, NNNNNNNNNNNNNNNNNNNNNNINNNNNNNENNNNNN, KKND…NNTE, and EESP…RLKS. Low complexity predominate over residues 10-67; that stretch reads TNINTKTTAPTTTTTEQQPEQQQQQPEQQQQEKQNNNNNNNNNNNNNNNINNNENNEN. The stretch at 36 to 117 forms a coiled coil; sequence EQQQQEKQNN…TSSALNVDQD (82 aa). Residues 168-179 show a composition bias toward polar residues; sequence SSSSFQPDNNSK. The span at 180 to 189 shows a compositional bias: basic residues; sequence IKGRKIRKTN. Residues 195–230 adopt a coiled-coil conformation; that stretch reads NNDSNEEEEETTTDTEEEEEEDTLLNENNNSINKNS. A compositionally biased stretch (acidic residues) spans 198-218; the sequence is SNEEEEETTTDTEEEEEEDTL. Low complexity-rich tracts occupy residues 219–231, 337–359, and 536–595; these read LNENNNSINKNSS, NYNNNSNNNNNNNNNNNNNNNNN, and NNNN…SSSS. Composition is skewed to low complexity over residues 1185–1234, 1251–1275, and 1286–1305; these read NNNN…NNNN, SPSTPSSSSSPTILNNNKKNNNNNK, and SPSSSPLSSSSSSSSSSSSG.

The protein belongs to the retinoblastoma protein (RB) family.

The protein localises to the nucleus. Functionally, key regulator of entry into cell division. Directly involved in heterochromatin formation by maintaining overall chromatin structure and, in particular, that of constitutive heterochromatin by stabilizing histone methylation. Controls histone H4 'Lys-20' trimethylation. Probably acts as a transcription repressor by recruiting chromatin-modifying enzymes to promoters. Plays a dual role, regulating cell-cycle progression and transcriptional events leading to terminal differentiation. In the absence of a G1 phase, functions in late G2 controlling the expression of both S-phase and mitotic genes. Controls stalk/spore preference by suppressing the DIF response in cells destined for the spore pathway. DIF is a chlorinated hydroxyphenone made by cells of spore pathway that promotes stalk differentiation. The protein is Retinoblastoma-like protein A of Dictyostelium discoideum (Social amoeba).